Consider the following 165-residue polypeptide: Crossover junction endodeoxyribonuclease RuvC (165 aa).

Catalysis depends on residues Asp-8, Glu-67, and Asp-139. Residues Asp-8, Glu-67, and Asp-139 each coordinate Mg(2+).

Belongs to the RuvC family. Homodimer which binds Holliday junction (HJ) DNA. The HJ becomes 2-fold symmetrical on binding to RuvC with unstacked arms; it has a different conformation from HJ DNA in complex with RuvA. In the full resolvosome a probable DNA-RuvA(4)-RuvB(12)-RuvC(2) complex forms which resolves the HJ. Mg(2+) serves as cofactor.

The protein localises to the cytoplasm. It catalyses the reaction Endonucleolytic cleavage at a junction such as a reciprocal single-stranded crossover between two homologous DNA duplexes (Holliday junction).. Its function is as follows. The RuvA-RuvB-RuvC complex processes Holliday junction (HJ) DNA during genetic recombination and DNA repair. Endonuclease that resolves HJ intermediates. Cleaves cruciform DNA by making single-stranded nicks across the HJ at symmetrical positions within the homologous arms, yielding a 5'-phosphate and a 3'-hydroxyl group; requires a central core of homology in the junction. The consensus cleavage sequence is 5'-(A/T)TT(C/G)-3'. Cleavage occurs on the 3'-side of the TT dinucleotide at the point of strand exchange. HJ branch migration catalyzed by RuvA-RuvB allows RuvC to scan DNA until it finds its consensus sequence, where it cleaves and resolves the cruciform DNA. The chain is Crossover junction endodeoxyribonuclease RuvC from Alkalilimnicola ehrlichii (strain ATCC BAA-1101 / DSM 17681 / MLHE-1).